Here is a 458-residue protein sequence, read N- to C-terminus: UPF0210 protein MmarC6_1246 (458 aa).

Belongs to the UPF0210 family.

The protein is UPF0210 protein MmarC6_1246 of Methanococcus maripaludis (strain C6 / ATCC BAA-1332).